We begin with the raw amino-acid sequence, 31 residues long: MPTITSYFGFLLAASTITPALFIGLSKIRLI.

A helical transmembrane segment spans residues 4–26; it reads ITSYFGFLLAASTITPALFIGLS.

It belongs to the PetL family. In terms of assembly, the 4 large subunits of the cytochrome b6-f complex are cytochrome b6, subunit IV (17 kDa polypeptide, PetD), cytochrome f and the Rieske protein, while the 4 small subunits are PetG, PetL, PetM and PetN. The complex functions as a dimer.

The protein resides in the plastid. It is found in the chloroplast thylakoid membrane. In terms of biological role, component of the cytochrome b6-f complex, which mediates electron transfer between photosystem II (PSII) and photosystem I (PSI), cyclic electron flow around PSI, and state transitions. PetL is important for photoautotrophic growth as well as for electron transfer efficiency and stability of the cytochrome b6-f complex. In Buxus microphylla (Littleleaf boxwood), this protein is Cytochrome b6-f complex subunit 6.